A 467-amino-acid polypeptide reads, in one-letter code: Methylenetetrahydrofolate--tRNA-(uracil-5-)-methyltransferase TrmFO (467 aa).

10 to 15 serves as a coordination point for FAD; sequence GGGMAG.

The protein belongs to the MnmG family. TrmFO subfamily. The cofactor is FAD.

The protein resides in the cytoplasm. The enzyme catalyses uridine(54) in tRNA + (6R)-5,10-methylene-5,6,7,8-tetrahydrofolate + NADH + H(+) = 5-methyluridine(54) in tRNA + (6S)-5,6,7,8-tetrahydrofolate + NAD(+). It catalyses the reaction uridine(54) in tRNA + (6R)-5,10-methylene-5,6,7,8-tetrahydrofolate + NADPH + H(+) = 5-methyluridine(54) in tRNA + (6S)-5,6,7,8-tetrahydrofolate + NADP(+). Functionally, catalyzes the folate-dependent formation of 5-methyl-uridine at position 54 (M-5-U54) in all tRNAs. The polypeptide is Methylenetetrahydrofolate--tRNA-(uracil-5-)-methyltransferase TrmFO (Hyphomonas neptunium (strain ATCC 15444)).